The following is a 307-amino-acid chain: Aspartate carbamoyltransferase catalytic subunit (307 aa).

The carbamoyl phosphate site is built by R55 and T56. L-aspartate is bound at residue K85. R106, H134, and Q137 together coordinate carbamoyl phosphate. R167 and R228 together coordinate L-aspartate. Residues L266 and P267 each coordinate carbamoyl phosphate.

It belongs to the aspartate/ornithine carbamoyltransferase superfamily. ATCase family. As to quaternary structure, heterododecamer (2C3:3R2) of six catalytic PyrB chains organized as two trimers (C3), and six regulatory PyrI chains organized as three dimers (R2).

The enzyme catalyses carbamoyl phosphate + L-aspartate = N-carbamoyl-L-aspartate + phosphate + H(+). Its pathway is pyrimidine metabolism; UMP biosynthesis via de novo pathway; (S)-dihydroorotate from bicarbonate: step 2/3. In terms of biological role, catalyzes the condensation of carbamoyl phosphate and aspartate to form carbamoyl aspartate and inorganic phosphate, the committed step in the de novo pyrimidine nucleotide biosynthesis pathway. This chain is Aspartate carbamoyltransferase catalytic subunit, found in Tolumonas auensis (strain DSM 9187 / NBRC 110442 / TA 4).